The following is a 213-amino-acid chain: KHG/KDPG aldolase (213 aa).

Glu-45 functions as the Proton acceptor in the catalytic mechanism. Residues Arg-49, Thr-73, and Lys-133 each coordinate pyruvate. Lys-133 functions as the Schiff-base intermediate with substrate in the catalytic mechanism.

This sequence belongs to the KHG/KDPG aldolase family. As to quaternary structure, homotrimer.

The protein localises to the cytoplasm. It catalyses the reaction 2-dehydro-3-deoxy-6-phospho-D-gluconate = D-glyceraldehyde 3-phosphate + pyruvate. The enzyme catalyses (4S)-4-hydroxy-2-oxoglutarate = glyoxylate + pyruvate. Its pathway is carbohydrate acid metabolism; 2-dehydro-3-deoxy-D-gluconate degradation; D-glyceraldehyde 3-phosphate and pyruvate from 2-dehydro-3-deoxy-D-gluconate: step 2/2. The protein operates within carbohydrate metabolism; glyoxylate and dicarboxylate metabolism. Functionally, involved in the degradation of glucose via the Entner-Doudoroff pathway. Catalyzes the reversible, stereospecific retro-aldol cleavage of 2-keto-3-deoxy-6-phosphogluconate (KDPG) to pyruvate and D-glyceraldehyde-3-phosphate. In addition to its KDPG aldolase activity, catalyzes the reversible cleavage of 2-keto-4-hydroxyglutarate (KHG) to glyoxylate and pyruvate. The enzyme is stereoselective for the S-enantiomer of KHG. Cleavage of KHG could serve in tricarboxylic acid (TCA) cycle regulation or, when operating in the reverse direction, in the detoxification of glyoxylate. This is KHG/KDPG aldolase (eda) from Escherichia coli O157:H7.